A 209-amino-acid chain; its full sequence is High frequency lysogenization protein HflD homolog (209 aa).

This sequence belongs to the HflD family.

The protein localises to the cytoplasm. It localises to the cell inner membrane. The chain is High frequency lysogenization protein HflD homolog from Saccharophagus degradans (strain 2-40 / ATCC 43961 / DSM 17024).